Consider the following 950-residue polypeptide: MFHFQRSFSSRKAHGLLSFKNRNYIHIEAPFDIAAIQDGWNIIRKHIHYPKPKSIEAPMFPILLPPPNITGKLHIGHALTITIQDALARFYAMHGYKVSFRPGTDHAGIATQSVVEKYLQKKGVYRNQLSKDELLSSIHSWQVKYQKSIINQLKSFEAIFDWDNIFYTMDQNRSEAVNEAFISLFNAGLIYRANRFVNWCPKLESAVSDIEVESQQINKPVTKYVDNTPVEFGWLYEISYQLEGSDNEQLNVSTTRPETIFGDRAIAVSPHDERYKKYVGRFVKHPLIDDLLIPVICDNAVDRHFGTGVLKITPMHSIVDYEIAKRHNIDCVSIMDKSGNLINCSKEVNGMNRLKARSKIVRLLQQRNRLVEQVPHSLILSVCSRTGDVIEPVMVPQWYLSVDSLKKEVLKSSNKLKLVPSLARKEWDSWFKKMGDWCISRQIWWGHQIPVWKILEEDKWIAAPNYEKALQLSVGKSVSQDSDVLDTWFSSALLPLSAFGWPKSKDIQPLPFIESGQDILFFWIARMALLCKYFSNELPFKEIILHPLVRDSEGRKMSKSLGNVIDPMDIINGVTLENMKKALLEGNLPISEVHKSSKQMEKAFPNGIPAQGIDIFRYGLFLCLHHEQRILLDMNSFSDAHRFVSKLWNLARYFNQYKDKENPLKLTDSQRQRISLLKMATYSKLHHAVEGVKESFEQRKFFNAADIMKNFLLNDLSSVYVELTRFDVKDSKSSAYEVYRVFSDILHIFLKLIHPIVPCISGVMLHSKIIPERKNSEFLSFPTSQQECLLVHDNQAEVVVQNAYDVLIQLRKLESPLNKSPSREHTVYISTSLEPLKYFYDAIEQSTNLKLKSISQEDTIDLMRNQTFILSRISSDTILLVPKKLYPSKRKKLRKNLDDLQKKLDKIQHTTSSSGYEKAPSYIKLKNCELQKDILVKIQDIKQALLNTEI.

Residues 1–90 constitute a mitochondrion transit peptide; the sequence is MFHFQRSFSS…ITIQDALARF (90 aa). The short motif at 67 to 77 is the 'HIGH' region element; the sequence is PNITGKLHIGH. A 'KMSKS' region motif is present at residues 556-560; it reads KMSKS. An ATP-binding site is contributed by Lys559.

It belongs to the class-I aminoacyl-tRNA synthetase family.

Its subcellular location is the mitochondrion. It carries out the reaction tRNA(Val) + L-valine + ATP = L-valyl-tRNA(Val) + AMP + diphosphate. The sequence is that of Valine--tRNA ligase, mitochondrial (vas1) from Schizosaccharomyces pombe (strain 972 / ATCC 24843) (Fission yeast).